A 443-amino-acid chain; its full sequence is 3-isopropylmalate dehydratase large subunit (443 aa).

Cys347, Cys407, and Cys410 together coordinate [4Fe-4S] cluster.

It belongs to the aconitase/IPM isomerase family. LeuC type 1 subfamily. In terms of assembly, heterodimer of LeuC and LeuD. Requires [4Fe-4S] cluster as cofactor.

It carries out the reaction (2R,3S)-3-isopropylmalate = (2S)-2-isopropylmalate. It participates in amino-acid biosynthesis; L-leucine biosynthesis; L-leucine from 3-methyl-2-oxobutanoate: step 2/4. In terms of biological role, catalyzes the isomerization between 2-isopropylmalate and 3-isopropylmalate, via the formation of 2-isopropylmaleate. This Buchnera aphidicola subsp. Uroleucon aeneum protein is 3-isopropylmalate dehydratase large subunit.